Consider the following 693-residue polypeptide: ATP-dependent DNA helicase RecG (693 aa).

A wedge domain region spans residues 48 to 146 (THLYPIGELL…GDLSTPELQE (99 aa)). The Helicase ATP-binding domain maps to 283 to 448 (DMALDVPMMR…AYADLDTSVI (166 aa)). 296-303 (GDVGSGKT) contributes to the ATP binding site. The short motif at 397–400 (DEQH) is the DEAH box element. One can recognise a Helicase C-terminal domain in the interval 482 to 628 (EGRQAYWVCT…GFVIAQKDLE (147 aa)).

It belongs to the helicase family. RecG subfamily. Monomer.

It catalyses the reaction Couples ATP hydrolysis with the unwinding of duplex DNA by translocating in the 3'-5' direction.. The catalysed reaction is ATP + H2O = ADP + phosphate + H(+). Plays a critical role in recombination and DNA repair. Helps process Holliday junction intermediates to mature products by catalyzing branch migration. Has replication fork regression activity, unwinds stalled or blocked replication forks to make a HJ that can be resolved. Has a DNA unwinding activity characteristic of a DNA helicase with 3'-5' polarity. Functionally, plays a role in recovery after DNA ADP-ribosylation. The protein is ATP-dependent DNA helicase RecG of Escherichia coli O127:H6 (strain E2348/69 / EPEC).